Consider the following 155-residue polypeptide: UBA-like domain-containing protein 1 (155 aa).

The disordered stretch occupies residues 81 to 155 (KASESFNSSS…KASAAMEAER (75 aa)). Residues 83-96 (SESFNSSSSPSMAT) show a composition bias toward low complexity. Polar residues predominate over residues 112–127 (ANQQSLWTQGPSAQQT). Residues 139–155 (QQAASEQKASAAMEAER) are compositionally biased toward low complexity.

Belongs to the UBALD family.

This chain is UBA-like domain-containing protein 1 (ubald1), found in Danio rerio (Zebrafish).